The primary structure comprises 451 residues: MDKFEKWLNKTLMPLASKMNKNHFISALSEAFMRCMPLTLGIALLTIIGYFPVPAWVDFLNSIGLAQHFSAVIGAVTSALAIYVTYNFAYSYVNRHEYNGHTAGLLSIASLLMLMPQIITVPVVKNIPTEFPKSAVVDSVSNVEAFQTVYTGSTGLIVAIIIGFIVSLVYIQLSKRNLVIKLPAGVPPMVVDSLSPAIISMVIFCLMFGIRVGFSYTPFHDIFNFSTQLIQAPLTGAVANPWVLMGIFTFGNFLWFFGIHPNLIGGILNPLLLTMSYANIDAYAAGKPVPYLQMMIVFAVGANAWGGSGNTYGLVISMFTAKSERYKQLLKLGAIPSIFNISEPLLFGLPMMLNPLFFIPLVFQPAILGTVALGLAKILYITNLNPMTALLPWTTPAPVRMAISGGLPFLIIFAICLVLNVLIYYPFFKVAYNKALEEEKAAVELEGSETA.

Residues 8 to 427 form the PTS EIIC type-3 domain; that stretch reads LNKTLMPLAS…VLNVLIYYPF (420 aa). 11 helical membrane-spanning segments follow: residues 40 to 60, 69 to 89, 104 to 124, 151 to 171, 190 to 210, 239 to 259, 263 to 283, 296 to 316, 332 to 352, 356 to 376, and 403 to 423; these read LGIALLTIIGYFPVPAWVDFL, FSAVIGAVTSALAIYVTYNFA, GLLSIASLLMLMPQIITVPVV, TGSTGLIVAIIIGFIVSLVYI, VVDSLSPAIISMVIFCLMFGI, ANPWVLMGIFTFGNFLWFFGI, LIGGILNPLLLTMSYANIDAY, IVFAVGANAWGGSGNTYGLVI, LGAIPSIFNISEPLLFGLPMM, LFFIPLVFQPAILGTVALGLA, and ISGGLPFLIIFAICLVLNVLI.

Its subcellular location is the cell membrane. Functionally, the phosphoenolpyruvate-dependent sugar phosphotransferase system (PTS), a major carbohydrate active transport system, catalyzes the phosphorylation of incoming sugar substrates concomitant with their translocation across the cell membrane. Involved in galactose transport with PtcA and PtcB. The protein is PTS system galactose-specific EIIC component of Lactococcus lactis subsp. cremoris (strain MG1363).